The following is a 215-amino-acid chain: Probable transaldolase (215 aa).

Catalysis depends on lysine 83, which acts as the Schiff-base intermediate with substrate.

It belongs to the transaldolase family. Type 3B subfamily.

It localises to the cytoplasm. It catalyses the reaction D-sedoheptulose 7-phosphate + D-glyceraldehyde 3-phosphate = D-erythrose 4-phosphate + beta-D-fructose 6-phosphate. The protein operates within carbohydrate degradation; pentose phosphate pathway; D-glyceraldehyde 3-phosphate and beta-D-fructose 6-phosphate from D-ribose 5-phosphate and D-xylulose 5-phosphate (non-oxidative stage): step 2/3. Functionally, transaldolase is important for the balance of metabolites in the pentose-phosphate pathway. In Anaeromyxobacter sp. (strain Fw109-5), this protein is Probable transaldolase.